The following is a 292-amino-acid chain: NAD kinase (292 aa).

The active-site Proton acceptor is Asp72. Residues 72-73, 146-147, His157, Arg174, Asp176, and 187-192 each bind NAD(+); these read DG, NE, and TAYALS.

The protein belongs to the NAD kinase family. A divalent metal cation is required as a cofactor.

The protein resides in the cytoplasm. The enzyme catalyses NAD(+) + ATP = ADP + NADP(+) + H(+). In terms of biological role, involved in the regulation of the intracellular balance of NAD and NADP, and is a key enzyme in the biosynthesis of NADP. Catalyzes specifically the phosphorylation on 2'-hydroxyl of the adenosine moiety of NAD to yield NADP. This chain is NAD kinase, found in Shewanella oneidensis (strain ATCC 700550 / JCM 31522 / CIP 106686 / LMG 19005 / NCIMB 14063 / MR-1).